Here is a 387-residue protein sequence, read N- to C-terminus: EARP-interacting protein homolog (387 aa).

WD repeat units lie at residues 132–172, 182–222, 226–266, and 270–310; these read TAHG…TKSV, KGQL…QIYC, AHGQ…EPVK, and EHSH…SEPF. The tract at residues 311–339 is disordered; the sequence is GHLVDDEDLSDQEDNPQEEKTKEPLQDSI. Residues 315 to 326 show a composition bias toward acidic residues; it reads DDEDLSDQEDNP. A WD 5 repeat occupies 345–385; it reads EHEDSVYAVEWSSADPWLFASLSYDGRLVINRVPRALKYNI.

This sequence belongs to the WD repeat EIPR1 family.

Its subcellular location is the golgi apparatus. It is found in the trans-Golgi network. In terms of biological role, may act as a component of endosomal retrieval machinery that is involved in protein transport from early endosomes to either recycling endosomes or the trans-Golgi network. This Xenopus laevis (African clawed frog) protein is EARP-interacting protein homolog.